The following is a 339-amino-acid chain: Holliday junction branch migration complex subunit RuvB (339 aa).

Residues methionine 1–tyrosine 181 form a large ATPase domain (RuvB-L) region. ATP-binding positions include leucine 20, arginine 21, glycine 62, lysine 65, threonine 66, threonine 67, glutamate 128–phenylalanine 130, arginine 171, tyrosine 181, and arginine 218. Threonine 66 serves as a coordination point for Mg(2+). Positions serine 182–glutamate 252 are small ATPAse domain (RuvB-S). Residues glutamate 255–tryptophan 339 form a head domain (RuvB-H) region. DNA-binding residues include arginine 310 and arginine 315.

It belongs to the RuvB family. In terms of assembly, homohexamer. Forms an RuvA(8)-RuvB(12)-Holliday junction (HJ) complex. HJ DNA is sandwiched between 2 RuvA tetramers; dsDNA enters through RuvA and exits via RuvB. An RuvB hexamer assembles on each DNA strand where it exits the tetramer. Each RuvB hexamer is contacted by two RuvA subunits (via domain III) on 2 adjacent RuvB subunits; this complex drives branch migration. In the full resolvosome a probable DNA-RuvA(4)-RuvB(12)-RuvC(2) complex forms which resolves the HJ.

The protein resides in the cytoplasm. The catalysed reaction is ATP + H2O = ADP + phosphate + H(+). Functionally, the RuvA-RuvB-RuvC complex processes Holliday junction (HJ) DNA during genetic recombination and DNA repair, while the RuvA-RuvB complex plays an important role in the rescue of blocked DNA replication forks via replication fork reversal (RFR). RuvA specifically binds to HJ cruciform DNA, conferring on it an open structure. The RuvB hexamer acts as an ATP-dependent pump, pulling dsDNA into and through the RuvAB complex. RuvB forms 2 homohexamers on either side of HJ DNA bound by 1 or 2 RuvA tetramers; 4 subunits per hexamer contact DNA at a time. Coordinated motions by a converter formed by DNA-disengaged RuvB subunits stimulates ATP hydrolysis and nucleotide exchange. Immobilization of the converter enables RuvB to convert the ATP-contained energy into a lever motion, pulling 2 nucleotides of DNA out of the RuvA tetramer per ATP hydrolyzed, thus driving DNA branch migration. The RuvB motors rotate together with the DNA substrate, which together with the progressing nucleotide cycle form the mechanistic basis for DNA recombination by continuous HJ branch migration. Branch migration allows RuvC to scan DNA until it finds its consensus sequence, where it cleaves and resolves cruciform DNA. The polypeptide is Holliday junction branch migration complex subunit RuvB (Carboxydothermus hydrogenoformans (strain ATCC BAA-161 / DSM 6008 / Z-2901)).